Consider the following 195-residue polypeptide: MRSHSITRSTAETDIEVSVQLDGTGRYDNQTGVGFFDHMLDQLARHSLIDLSVRAKGDLHVDDHHTVEDTGIALGQALAGALGDKRGIVRYGSCLLPMDDALVRCALDLSARPYLIWNVDMPTAKIGTFDTELVREFFTALATHGGITLHIDLLHGINSHHIAEATFKSVARALRQAVETDPRKSDAIPSTKGAL.

This sequence belongs to the imidazoleglycerol-phosphate dehydratase family.

It localises to the cytoplasm. The enzyme catalyses D-erythro-1-(imidazol-4-yl)glycerol 3-phosphate = 3-(imidazol-4-yl)-2-oxopropyl phosphate + H2O. Its pathway is amino-acid biosynthesis; L-histidine biosynthesis; L-histidine from 5-phospho-alpha-D-ribose 1-diphosphate: step 6/9. The protein is Imidazoleglycerol-phosphate dehydratase of Roseobacter denitrificans (strain ATCC 33942 / OCh 114) (Erythrobacter sp. (strain OCh 114)).